Consider the following 153-residue polypeptide: Ribosome maturation factor RimP (153 aa).

It belongs to the RimP family.

Its subcellular location is the cytoplasm. Functionally, required for maturation of 30S ribosomal subunits. In Nostoc punctiforme (strain ATCC 29133 / PCC 73102), this protein is Ribosome maturation factor RimP.